The sequence spans 183 residues: Transmembrane protein 154 (183 aa).

The signal sequence occupies residues 1–22 (MQAPRAALVFALVIALVPVGRG). Over 23–75 (NYEELENSGDTTVESERPNKVTIPSTFAAVTIKETLNANINSTNFAPDENQLE) the chain is Extracellular. Residues 76-96 (FILMVLIPLILLVLLLLSVVF) traverse the membrane as a helical segment. Over 97–183 (LATYYKRKRT…SNHNPSDSES (87 aa)) the chain is Cytoplasmic. The tract at residues 163-183 (ECLPTLKEEKESNHNPSDSES) is disordered. Position 179 is a phosphoserine (serine 179).

The protein resides in the membrane. This is Transmembrane protein 154 (TMEM154) from Homo sapiens (Human).